Reading from the N-terminus, the 488-residue chain is UDP-glycosyltransferase 85A3 (488 aa).

Residues S306, 363–365 (CPQ), 380–388 (HCGWNSTLE), and 402–405 (FAEQ) each bind UDP-alpha-D-glucose.

It belongs to the UDP-glycosyltransferase family. In terms of tissue distribution, expressed in roots and flowers.

This chain is UDP-glycosyltransferase 85A3 (UGT85A3), found in Arabidopsis thaliana (Mouse-ear cress).